Consider the following 715-residue polypeptide: Lactococcin-A transport/processing ATP-binding protein LcnC (715 aa).

One can recognise a Peptidase C39 domain in the interval 11 to 138 (QVDEMDCGCA…SEWTGISLFL (128 aa)). C17 is a catalytic residue. Transmembrane regions (helical) follow at residues 167-187 (VILNIVIASFIVTLINILGSY), 197-217 (IPNALMGTLGIISVGLLLTYI), 237-257 (LAIDVILSYIRHIFQLPMSFF), 282-302 (TILSLFLDLTIVVMTGLILGL), 307-327 (LFLLVLLAIPLYIVVIIIFTP), and 396-416 (AIIQLTLSVTILWFGATLVIS). Positions 168–450 (ILNIVIASFI…IINLQTKLQK (283 aa)) constitute an ABC transmembrane type-1 domain. The ABC transporter domain occupies 482–715 (LNMSDISYQY…NGFYEQLYHN (234 aa)). 515 to 522 (GMSGSGKS) is an ATP binding site.

Belongs to the ABC transporter superfamily. Bacteriocin (lactococcin) exporter (TC 3.A.1.112.3) family.

The protein localises to the cell membrane. Functionally, involved in the export process of the bacteriocin lactococcin A. The polypeptide is Lactococcin-A transport/processing ATP-binding protein LcnC (lcnC) (Lactococcus lactis subsp. lactis (Streptococcus lactis)).